Consider the following 117-residue polypeptide: Peptidyl-tRNA hydrolase (117 aa).

This sequence belongs to the PTH2 family.

The protein resides in the cytoplasm. The enzyme catalyses an N-acyl-L-alpha-aminoacyl-tRNA + H2O = an N-acyl-L-amino acid + a tRNA + H(+). Functionally, the natural substrate for this enzyme may be peptidyl-tRNAs which drop off the ribosome during protein synthesis. The protein is Peptidyl-tRNA hydrolase of Thermoplasma volcanium (strain ATCC 51530 / DSM 4299 / JCM 9571 / NBRC 15438 / GSS1).